The sequence spans 664 residues: DNA ligase (664 aa).

NAD(+)-binding positions include 32–36 (DKEYD) and 80–81 (SL). The N6-AMP-lysine intermediate role is filled by K122. R144, E178, and K314 together coordinate NAD(+). Zn(2+) is bound by residues C407, C410, C423, and C429. A BRCT domain is found at 587 to 664 (IDENPFMDKT…NEEEFSNKIK (78 aa)).

This sequence belongs to the NAD-dependent DNA ligase family. LigA subfamily. Mg(2+) is required as a cofactor. It depends on Mn(2+) as a cofactor.

It carries out the reaction NAD(+) + (deoxyribonucleotide)n-3'-hydroxyl + 5'-phospho-(deoxyribonucleotide)m = (deoxyribonucleotide)n+m + AMP + beta-nicotinamide D-nucleotide.. Functionally, DNA ligase that catalyzes the formation of phosphodiester linkages between 5'-phosphoryl and 3'-hydroxyl groups in double-stranded DNA using NAD as a coenzyme and as the energy source for the reaction. It is essential for DNA replication and repair of damaged DNA. The polypeptide is DNA ligase (Clostridium botulinum (strain Okra / Type B1)).